The chain runs to 657 residues: Pentatricopeptide repeat-containing protein CRR2, chloroplastic (657 aa).

Residues Met-1–Gln-51 constitute a chloroplast transit peptide. PPR repeat units follow at residues Ala-45–Pro-75, Ser-76–Gln-110, Asp-111–Arg-141, Thr-142–Ser-176, Asp-177–Ser-215, His-216–Arg-246, Asn-247–Glu-277, Asn-284–Ser-318, Ile-319–Arg-349, Asp-350–Pro-384, Thr-385–Pro-420, and Gln-421–Glu-451. The type E motif stretch occupies residues Val-456–Arg-531. The type E(+) motif stretch occupies residues Arg-532 to Lys-562. Positions Glu-563–Trp-657 are type DYW motif.

This sequence belongs to the PPR family. PCMP-H subfamily.

The protein localises to the plastid. Its subcellular location is the chloroplast. Required for the intergenic processing between chloroplast rsp7 and ndhB transcripts. Necessary for chloroplast NADH dehydrogenase-like (NDH) complex-dependent cyclic electron transport around PSI (CET). The protein is Pentatricopeptide repeat-containing protein CRR2, chloroplastic of Arabidopsis thaliana (Mouse-ear cress).